The sequence spans 166 residues: uncharacterized protein (166 aa).

Residues 2–82 (DNWVCYLIMS…KRLSKKRNIQ (81 aa)) form the GIY-YIG domain. The disordered stretch occupies residues 23–43 (NNRQRRLNDHNNLNPSRKGAK).

This is an uncharacterized protein from Acanthamoeba polyphaga mimivirus (APMV).